Consider the following 90-residue polypeptide: Bombyxin B-5 (90 aa).

The N-terminal stretch at 1–20 is a signal peptide; the sequence is MMKTAVMFILVVVISLTYSS. Intrachain disulfides connect Cys30/Cys75, Cys42/Cys88, and Cys74/Cys79. Residues 49–64 constitute a propeptide, c peptide like; the sequence is GGAQYAPYWQETYLRS.

This sequence belongs to the insulin family. Heterodimer of a B chain and an A chain linked by two disulfide bonds.

Its subcellular location is the secreted. In terms of biological role, brain peptide responsible for activation of prothoracic glands to produce ecdysone in insects. The sequence is that of Bombyxin B-5 (BBXB5) from Bombyx mori (Silk moth).